A 477-amino-acid chain; its full sequence is MISAVLTTQPVHIIGAGLAGSEAAWQVARAGIRVVLHEMRPDRMTQAHKTDGLAELVCSNSFRSDDAANNAVGLLHAEMRKLGSLVMRAADANQVPAGGALAVDRDGFSAAVTKALAEHPLIEIRREEIGGLPPEDWGNVIIATGPLTSAPLAEAIRALTDESALAFFDAIAPIVHRDSIDMSVAWFQSRYDKAGPGGSGADYLNCPMTREQYDGFVDALIEGEKVDFKDWERDTPYFDGCLPIEVMAERGRETLRHGPMKPVGLTNPHNPLVKSYAIVQLRQDNKLGTLFNMVGFQTKLNYGAQQRVFRTIPGLENAEFARLGGLHRNTFLNSPKLLDPQLRLRAAPRLRFAGQMTGCEGYVESAGIGLVAGLCAAADAIGQTLAAPPPTTALGALLGHITGGHIETIDAGPRSFQPMNINFGLFPPLATAPTHGPDGKKLRGPEKSVAKKQALSARALADLDRWIGDCLKLPAAA.

FAD is bound at residue 15–20 (GAGLAG).

This sequence belongs to the MnmG family. TrmFO subfamily. FAD serves as cofactor.

It is found in the cytoplasm. It carries out the reaction uridine(54) in tRNA + (6R)-5,10-methylene-5,6,7,8-tetrahydrofolate + NADH + H(+) = 5-methyluridine(54) in tRNA + (6S)-5,6,7,8-tetrahydrofolate + NAD(+). The catalysed reaction is uridine(54) in tRNA + (6R)-5,10-methylene-5,6,7,8-tetrahydrofolate + NADPH + H(+) = 5-methyluridine(54) in tRNA + (6S)-5,6,7,8-tetrahydrofolate + NADP(+). In terms of biological role, catalyzes the folate-dependent formation of 5-methyl-uridine at position 54 (M-5-U54) in all tRNAs. The protein is Methylenetetrahydrofolate--tRNA-(uracil-5-)-methyltransferase TrmFO of Rhodopseudomonas palustris (strain BisB5).